We begin with the raw amino-acid sequence, 130 residues long: Small ribosomal subunit protein uS9 (130 aa).

This sequence belongs to the universal ribosomal protein uS9 family.

The polypeptide is Small ribosomal subunit protein uS9 (Leptothrix cholodnii (strain ATCC 51168 / LMG 8142 / SP-6) (Leptothrix discophora (strain SP-6))).